The primary structure comprises 163 residues: Large ribosomal subunit protein uL10 (163 aa).

Belongs to the universal ribosomal protein uL10 family. As to quaternary structure, part of the ribosomal stalk of the 50S ribosomal subunit. The N-terminus interacts with L11 and the large rRNA to form the base of the stalk. The C-terminus forms an elongated spine to which L12 dimers bind in a sequential fashion forming a multimeric L10(L12)X complex.

Functionally, forms part of the ribosomal stalk, playing a central role in the interaction of the ribosome with GTP-bound translation factors. In Pasteurella multocida (strain Pm70), this protein is Large ribosomal subunit protein uL10 (rplJ).